The chain runs to 1187 residues: MSRVGECGGGGGCGARRGKAAHAGAGAVAGFLGCLLLVWAMGGCGRGCGGGGGEGVRDRVEEVAAQFNLSMSKLQALASLLSSPERECICKSGTINDDNPAHSMPDMSNCRLKNKPSGGNQNRLDNVIIQDCCANEDNYDKNNHENNLLQNAMQQDIGSPTTLWNQNNALSFNHGMIFSLSASLGIVVILVVITIFKRGKQANELCQHEKLLQTPSVKISRKWSKRALLLGVLVGLCSSVWIFSSMHADVVARRIENLENMCDERARMLQDQFNVSMNHVHALAILVSTFHHGKNPSAIDQKTFEDFTARTTFERPLMSGVAYALKVLHSERELFEQKLGWKIKKMETEDQSLVHDYNPEKLQPSPVQDEYAPVIFSQETVKHIISVDMMSGKEDRDNILRSRATGKGALTAPFPLLKSNHLGVVLTFTVYKYDLPPDATPEERIEATLGYLGASFDVPSLVERLLEQLASKQKIVVRLYDITNHTYPTKMYDSDVIASDDLHISNIDFGDPTRKHVMHCRFKHAPSLPWSAIMISSAVAIIVLLVGYIIYATLNSLEEAEDNYTTMRDLKGRAEAADVAKSQFLATVSHEIRTPMNGVLGMLQMLMDTELDTTQRDFVVTAQESGKSLINLINEVLDLAKIESGKIELEAVRFDVRDILDNVVSLFSEKSWAKGIELAVLVSDQVPDVLIGDPWRFRQIITNLVGNSMKFTEQGHIFIRVHLIEEVKRKMEALDDTSPENIEVTANSKNTMPYNTLSGLEVANNRKTLESFRMFKDSSDAIDSVNLLVTVEDTGIGITKDAQTRIFTPFMQADGSTSRTYGGTGIGLSITKRLVELMGGEIGFVSKPGVSSTFSFTAIFKENRKDPGDIKRYCPEPTPPDFQGMRALVVDGRCARAEVTMYHLRRLGIQCDLAATSESALSALLESCNSSVKSSLNMVLVDKEAWGEDSGLAFFRCLIDLRLKGTLKSWQTMPKFFLLAGSITPADSDCLRLAGYSNSIRKPLRLSTVAACLSKALGVGLTGRRSRDNSLVLRSVLTGKNILVVDDNAVNRIVAAGALKKYGAIVTCVDSGKEAISRLQPPHKFDACFMDVQMPEMDGFEATRLVRSVESKINDTIQAGEVSSEIYGNKAHWHVPILAMTADVIQATFEGCMECGMDGYVAKPFEEQQLYSAVAHFLEADATDPLT.

Residues 1–175 are Extracellular-facing; sequence MSRVGECGGG…QNNALSFNHG (175 aa). The chain crosses the membrane as a helical span at residues 176-196; sequence MIFSLSASLGIVVILVVITIF. Over 197–226 the chain is Cytoplasmic; it reads KRGKQANELCQHEKLLQTPSVKISRKWSKR. A helical transmembrane segment spans residues 227–247; that stretch reads ALLLGVLVGLCSSVWIFSSMH. Topologically, residues 248-531 are extracellular; that stretch reads ADVVARRIEN…FKHAPSLPWS (284 aa). Positions 295–519 constitute a CHASE domain; the sequence is NPSAIDQKTF…GDPTRKHVMH (225 aa). The helical transmembrane segment at 532 to 552 threads the bilayer; it reads AIMISSAVAIIVLLVGYIIYA. At 553-1187 the chain is on the cytoplasmic side; it reads TLNSLEEAED…LEADATDPLT (635 aa). The region spanning 587-862 is the Histidine kinase domain; the sequence is TVSHEIRTPM…TFSFTAIFKE (276 aa). At His-590 the chain carries Phosphohistidine; by autocatalysis. 2 consecutive Response regulatory domains span residues 886–1017 and 1041–1178; these read RALV…SKAL and NILV…AHFL. Residues Asp-942 and Asp-1091 each carry the 4-aspartylphosphate modification.

In terms of processing, activation probably requires a transfer of a phosphate group between a His in the transmitter domain and an Asp of the receiver domain. As to expression, highly expressed in young leaves and at lower levels in roots, mature leaves, stems and spikelets.

Its subcellular location is the cell membrane. It carries out the reaction ATP + protein L-histidine = ADP + protein N-phospho-L-histidine.. Functionally, cytokinin receptor related to bacterial two-component regulators. Functions as a histidine kinase and transmits the stress signal to a downstream MAPK cascade. The chain is Probable histidine kinase 5 from Oryza sativa subsp. japonica (Rice).